A 513-amino-acid polypeptide reads, in one-letter code: ATP synthase subunit alpha 1 (513 aa).

Position 169-176 (169-176 (GDRQTGKT)) interacts with ATP.

Belongs to the ATPase alpha/beta chains family. As to quaternary structure, F-type ATPases have 2 components, CF(1) - the catalytic core - and CF(0) - the membrane proton channel. CF(1) has five subunits: alpha(3), beta(3), gamma(1), delta(1), epsilon(1). CF(0) has three main subunits: a(1), b(2) and c(9-12). The alpha and beta chains form an alternating ring which encloses part of the gamma chain. CF(1) is attached to CF(0) by a central stalk formed by the gamma and epsilon chains, while a peripheral stalk is formed by the delta and b chains.

It is found in the cell inner membrane. The enzyme catalyses ATP + H2O + 4 H(+)(in) = ADP + phosphate + 5 H(+)(out). Its function is as follows. Produces ATP from ADP in the presence of a proton gradient across the membrane. The alpha chain is a regulatory subunit. This is ATP synthase subunit alpha 1 from Methylococcus capsulatus (strain ATCC 33009 / NCIMB 11132 / Bath).